The following is a 513-amino-acid chain: Nitrogenase molybdenum-iron protein beta chain (513 aa).

The [8Fe-7S] cluster site is built by Cys-70, Cys-95, and Cys-153.

It belongs to the NifD/NifK/NifE/NifN family. In terms of assembly, tetramer of two alpha and two beta chains. Forms complex with the iron protein (nitrogenase component 2). [8Fe-7S] cluster is required as a cofactor.

It carries out the reaction N2 + 8 reduced [2Fe-2S]-[ferredoxin] + 16 ATP + 16 H2O = H2 + 8 oxidized [2Fe-2S]-[ferredoxin] + 2 NH4(+) + 16 ADP + 16 phosphate + 6 H(+). In terms of biological role, this molybdenum-iron protein is part of the nitrogenase complex that catalyzes the key enzymatic reactions in nitrogen fixation. In Sinorhizobium fredii (strain NBRC 101917 / NGR234), this protein is Nitrogenase molybdenum-iron protein beta chain (nifK1).